We begin with the raw amino-acid sequence, 271 residues long: Tryptophan synthase alpha chain (271 aa).

Active-site proton acceptor residues include Glu49 and Asp60.

It belongs to the TrpA family. As to quaternary structure, tetramer of two alpha and two beta chains.

The enzyme catalyses (1S,2R)-1-C-(indol-3-yl)glycerol 3-phosphate + L-serine = D-glyceraldehyde 3-phosphate + L-tryptophan + H2O. It participates in amino-acid biosynthesis; L-tryptophan biosynthesis; L-tryptophan from chorismate: step 5/5. Functionally, the alpha subunit is responsible for the aldol cleavage of indoleglycerol phosphate to indole and glyceraldehyde 3-phosphate. The sequence is that of Tryptophan synthase alpha chain from Burkholderia pseudomallei (strain 1106a).